A 3148-amino-acid chain; its full sequence is Huntingtin (3148 aa).

HEAT repeat units follow at residues 149–186 and 191–228; these read PYLV…ALGH and GEIK…HSRR. Polar residues-rich tracts occupy residues 428–451, 475–486, and 516–526; these read QQPR…SSEQ, SRSSSCGANITP, and PSDSSQTTTEG. Disordered stretches follow at residues 428–532 and 557–622; these read QQPR…SAVT and QDEE…NKMS. The span at 602 to 621 shows a compositional bias: basic and acidic residues; it reads SVDRFIPKDEPPEPEPDNKM. 2 HEAT repeats span residues 760-797 and 861-898; these read LSLV…SLCG and LQER…RLFF. Composition is skewed to low complexity over residues 1025–1042 and 1105–1115; these read TLSV…TTSS and SSSSTNTSGGT. 3 disordered regions span residues 1025-1047, 1098-1117, and 1158-1215; these read TLSV…VDPE, WAGE…GTHK, and GPPV…GSTA. Polar residues predominate over residues 1201–1215; sequence EANTGRPTESTGSTA. One copy of the HEAT 5 repeat lies at 1419 to 1456; sequence LFEPLVIKALKQYTTSTSVALQRQVLDLLAQLVQLRVN. Over residues 1712–1730 the composition is skewed to polar residues; the sequence is PNLSPSDQPAGDGQQNQEP. Disordered stretches follow at residues 1712–1735 and 2072–2091; these read PNLS…GEAQ and VSDT…DGDP. Over residues 2072-2084 the composition is skewed to low complexity; sequence VSDTSSPSTPVTS. Positions 2398-2407 match the Nuclear export signal motif; that stretch reads IIISLSRLPL. Residues 2639–2649 are compositionally biased toward acidic residues; that stretch reads EWGEDEDDEAD. The disordered stretch occupies residues 2639-2664; that stretch reads EWGEDEDDEADPPAPTSPPLSPINSR. Residues 2650 to 2659 are compositionally biased toward pro residues; sequence PPAPTSPPLS.

This sequence belongs to the huntingtin family.

It is found in the cytoplasm. Its subcellular location is the nucleus. May play a role in microtubule-mediated transport or vesicle function. This is Huntingtin (htt) from Takifugu rubripes (Japanese pufferfish).